The primary structure comprises 397 residues: Argininosuccinate synthase (397 aa).

An ATP-binding site is contributed by 9-17 (AYSGGLDTS). Position 87 (tyrosine 87) interacts with L-citrulline. Glycine 117 contacts ATP. Threonine 119, asparagine 123, and aspartate 124 together coordinate L-aspartate. Asparagine 123 provides a ligand contact to L-citrulline. L-citrulline is bound by residues arginine 127, serine 175, serine 184, glutamate 260, and tyrosine 272.

Belongs to the argininosuccinate synthase family. Type 1 subfamily. In terms of assembly, homotetramer.

It localises to the cytoplasm. The catalysed reaction is L-citrulline + L-aspartate + ATP = 2-(N(omega)-L-arginino)succinate + AMP + diphosphate + H(+). Its pathway is amino-acid biosynthesis; L-arginine biosynthesis; L-arginine from L-ornithine and carbamoyl phosphate: step 2/3. The chain is Argininosuccinate synthase from Methanococcus maripaludis (strain DSM 14266 / JCM 13030 / NBRC 101832 / S2 / LL).